A 360-amino-acid chain; its full sequence is (+)-6a-hydroxymaackiain 3-O-methyltransferase 1 (360 aa).

S-adenosyl-L-methionine contacts are provided by residues 202–205 (VAGG), Asp-226, 226–227 (DQ), 246–247 (DM), and Lys-260. His-264 (proton acceptor) is an active-site residue.

The protein belongs to the class I-like SAM-binding methyltransferase superfamily. Cation-independent O-methyltransferase family. COMT subfamily.

It carries out the reaction (+)-6a-hydroxymaackiain + S-adenosyl-L-methionine = (+)-pisatin + S-adenosyl-L-homocysteine + H(+). The enzyme catalyses a 4'-hydroxyisoflavone + S-adenosyl-L-methionine = a 4'-methoxyisoflavone + S-adenosyl-L-homocysteine + H(+). Methyltransferase involved in the phytoalexin pisatin biosynthesis. Has both 3- and 4'-O-methyltransferase activities. Can use (+)-6a-hydroxymaackiain, 2,7,4'-trihydroxyisoflavanone and with much less activity (+)-medicarpin as substrates, but not (-)-6a-hydroxymaackiain, daidzein, formononetin or isoliquiritigenin. May be involved in formononetin biosynthesis. In Pisum sativum (Garden pea), this protein is (+)-6a-hydroxymaackiain 3-O-methyltransferase 1 (HMM1).